The primary structure comprises 112 residues: uncharacterized protein (112 aa).

A mitochondrion-targeting transit peptide spans 1-21 (MYLSAQLMRTVTASHLTLRAL).

Its subcellular location is the mitochondrion. This is an uncharacterized protein from Saccharomyces cerevisiae (strain ATCC 204508 / S288c) (Baker's yeast).